The chain runs to 155 residues: Ribosomal RNA large subunit methyltransferase H (155 aa).

Residues Leu-72, Gly-103, and 122 to 127 contribute to the S-adenosyl-L-methionine site; that span reads LSALTL.

The protein belongs to the RNA methyltransferase RlmH family. As to quaternary structure, homodimer.

It is found in the cytoplasm. It catalyses the reaction pseudouridine(1915) in 23S rRNA + S-adenosyl-L-methionine = N(3)-methylpseudouridine(1915) in 23S rRNA + S-adenosyl-L-homocysteine + H(+). Functionally, specifically methylates the pseudouridine at position 1915 (m3Psi1915) in 23S rRNA. This Enterobacter sp. (strain 638) protein is Ribosomal RNA large subunit methyltransferase H.